A 331-amino-acid polypeptide reads, in one-letter code: Phosphate acyltransferase (331 aa).

Belongs to the PlsX family. Homodimer. Probably interacts with PlsY.

Its subcellular location is the cytoplasm. The catalysed reaction is a fatty acyl-[ACP] + phosphate = an acyl phosphate + holo-[ACP]. It functions in the pathway lipid metabolism; phospholipid metabolism. Catalyzes the reversible formation of acyl-phosphate (acyl-PO(4)) from acyl-[acyl-carrier-protein] (acyl-ACP). This enzyme utilizes acyl-ACP as fatty acyl donor, but not acyl-CoA. The protein is Phosphate acyltransferase of Ureaplasma urealyticum serovar 10 (strain ATCC 33699 / Western).